The sequence spans 124 residues: Large ribosomal subunit protein eL31 (124 aa).

Belongs to the eukaryotic ribosomal protein eL31 family.

The chain is Large ribosomal subunit protein eL31 (RpL31) from Aedes aegypti (Yellowfever mosquito).